A 444-amino-acid chain; its full sequence is MGKGGNQDEGATELEAPMPTFRWEEIQKHNLRTDKWLVIDRKVYNITKWSSRHPGGQRVIGHYAGEDATDAFLAFHRNLDFVRKFMKPLLIGELAPEEPSQDRGKNSQITEDFRALRKTAEDMNLFKSNQLFFLLHLAHIIAMESIAWFTLFYFGNGWIPTIITAFVLATSQAQAGWLQHDYGHLSVYKKSMWNHIVHKFVIGHLKGASANWWNHRHFQHHAKPNIFHKDPDVNMLHVFVLGEWQPIEYGKKKLKYLPYNHQHEYFFLIGPPLLIPLYFQYQIIMTMIVRKYWADLAWAISYYTRFFITYIPFYGVLGSILFLNFIRFLESHWFVWVTQMNHIVMEIDREPYRDWFSSQLAATCNVEQSFFNDWFSGHLNFQIEHHLFPTMPRHNLHKIAPLVRSLCAKHGIEYQEKPLLRALQDIIGSLRKSGQLWLDAYLHK.

Residues 1 to 122 (MGKGGNQDEG…FRALRKTAED (122 aa)) are Cytoplasmic-facing. The Cytochrome b5 heme-binding domain occupies 18–95 (MPTFRWEEIQ…MKPLLIGELA (78 aa)). Residues 123–143 (MNLFKSNQLFFLLHLAHIIAM) traverse the membrane as a helical segment. At 144–147 (ESIA) the chain is on the lumenal side. Residues 148–168 (WFTLFYFGNGWIPTIITAFVL) traverse the membrane as a helical segment. Residues 169-264 (ATSQAQAGWL…KYLPYNHQHE (96 aa)) are Cytoplasmic-facing. The Histidine box-1 signature appears at 180 to 184 (HDYGH). Residues 217–221 (HFQHH) carry the Histidine box-2 motif. The helical transmembrane segment at 265–285 (YFFLIGPPLLIPLYFQYQIIM) threads the bilayer. Residues 286 to 305 (TMIVRKYWADLAWAISYYTR) are Lumenal-facing. A helical membrane pass occupies residues 306 to 326 (FFITYIPFYGVLGSILFLNFI). Topologically, residues 327 to 444 (RFLESHWFVW…QLWLDAYLHK (118 aa)) are cytoplasmic. A Histidine box-3 motif is present at residues 382–386 (QIEHH).

It belongs to the fatty acid desaturase type 1 family.

The protein resides in the endoplasmic reticulum membrane. The enzyme catalyses (9Z,12Z)-octadecadienoyl-CoA + 2 Fe(II)-[cytochrome b5] + O2 + 2 H(+) = (6Z,9Z,12Z)-octadecatrienoyl-CoA + 2 Fe(III)-[cytochrome b5] + 2 H2O. It carries out the reaction (9Z,12Z,15Z)-octadecatrienoyl-CoA + 2 Fe(II)-[cytochrome b5] + O2 + 2 H(+) = (6Z,9Z,12Z,15Z)-octadecatetraenoyl-CoA + 2 Fe(III)-[cytochrome b5] + 2 H2O. The catalysed reaction is (9Z,12Z,15Z,18Z,21Z)-tetracosapentaenoyl-CoA + 2 Fe(II)-[cytochrome b5] + O2 + 2 H(+) = (6Z,9Z,12Z,15Z,18Z,21Z)-tetracosahexaenoyl-CoA + 2 Fe(III)-[cytochrome b5] + 2 H2O. It catalyses the reaction (11E)-octadecenoyl-CoA + 2 Fe(II)-[cytochrome b5] + O2 + 2 H(+) = (6Z,11E)-octadecadienoyl-CoA + 2 Fe(III)-[cytochrome b5] + 2 H2O. The enzyme catalyses (11Z,14Z)-eicosadienoyl-CoA + 2 Fe(II)-[cytochrome b5] + O2 + 2 H(+) = (8Z,11Z,14Z)-eicosatrienoyl-CoA + 2 Fe(III)-[cytochrome b5] + 2 H2O. It carries out the reaction (11Z,14Z,17Z)-eicosatrienoyl-CoA + 2 Fe(II)-[cytochrome b5] + O2 + 2 H(+) = (8Z,11Z,14Z,17Z)-eicosatetraenoyl-CoA + 2 Fe(III)-[cytochrome b5] + 2 H2O. Its pathway is lipid metabolism; polyunsaturated fatty acid biosynthesis. In terms of biological role, involved in the biosynthesis of highly unsaturated fatty acids (HUFA) from the essential polyunsaturated fatty acids (PUFA) linoleic acid (LA) (18:2n-6) and alpha-linolenic acid (ALA) (18:3n-3) precursors, acting as a fatty acyl-coenzyme A (CoA) desaturase that introduces a cis double bond at carbon 6 of the fatty acyl chain. Catalyzes the first and rate limiting step in this pathway which is the desaturation of LA (18:2n-6) and ALA (18:3n-3) into gamma-linoleate (GLA) (18:3n-6) and stearidonate (18:4n-3), respectively. Subsequently, in the biosynthetic pathway of HUFA n-3 series, it desaturates tetracosapentaenoate (24:5n-3) to tetracosahexaenoate (24:6n-3), which is then converted to docosahexaenoate (DHA)(22:6n-3), an important lipid for nervous system function. It can also desaturate (11E)-octadecenoate (trans-vaccenoate, a metabolite in the biohydrogenation pathway of LA and the predominant trans fatty acid in cow milk) at carbon 6 generating (6Z,11E)-octadecadienoate. In addition to Delta-6 activity, this enzyme exhibits Delta-8 activity with slight biases toward n-3 fatty acyl-CoA substrates. The sequence is that of Acyl-CoA 6-desaturase (FADS2) from Bos taurus (Bovine).